We begin with the raw amino-acid sequence, 447 residues long: Tubulin beta chain (447 aa).

8 residues coordinate GTP: Gln11, Glu69, Ser138, Gly142, Thr143, Gly144, Asn204, and Asn226. Glu69 serves as a coordination point for Mg(2+).

This sequence belongs to the tubulin family. In terms of assembly, dimer of alpha and beta chains. A typical microtubule is a hollow water-filled tube with an outer diameter of 25 nm and an inner diameter of 15 nM. Alpha-beta heterodimers associate head-to-tail to form protofilaments running lengthwise along the microtubule wall with the beta-tubulin subunit facing the microtubule plus end conferring a structural polarity. Microtubules usually have 13 protofilaments but different protofilament numbers can be found in some organisms and specialized cells. Requires Mg(2+) as cofactor.

It is found in the cytoplasm. Its subcellular location is the cytoskeleton. Its function is as follows. Tubulin is the major constituent of microtubules, a cylinder consisting of laterally associated linear protofilaments composed of alpha- and beta-tubulin heterodimers. Microtubules grow by the addition of GTP-tubulin dimers to the microtubule end, where a stabilizing cap forms. Below the cap, tubulin dimers are in GDP-bound state, owing to GTPase activity of alpha-tubulin. This chain is Tubulin beta chain (TUB2), found in Penicillium digitatum (Green mold).